A 525-amino-acid polypeptide reads, in one-letter code: GMP synthase [glutamine-hydrolyzing] (525 aa).

The 199-residue stretch at 9 to 207 (RILILDFGSQ…VRDICQCEAL (199 aa)) folds into the Glutamine amidotransferase type-1 domain. The active-site Nucleophile is Cys86. Active-site residues include His181 and Glu183. A GMPS ATP-PPase domain is found at 208–400 (WTPAKIIDDA…LGLPYDMLYR (193 aa)). 235-241 (SGGVDSS) is a binding site for ATP.

As to quaternary structure, homodimer.

The enzyme catalyses XMP + L-glutamine + ATP + H2O = GMP + L-glutamate + AMP + diphosphate + 2 H(+). Its pathway is purine metabolism; GMP biosynthesis; GMP from XMP (L-Gln route): step 1/1. Catalyzes the synthesis of GMP from XMP. The chain is GMP synthase [glutamine-hydrolyzing] from Escherichia coli O8 (strain IAI1).